The chain runs to 267 residues: Small ribosomal subunit protein mS23 (267 aa).

The segment at 230–267 (VKTASKDGKSSNGSMGAEDVVEKTTSAWETEFVEEESS) is disordered.

The protein belongs to the mitochondrion-specific ribosomal protein mS23 family. In terms of assembly, component of the mitochondrial small ribosomal subunit.

The protein localises to the mitochondrion. This is Small ribosomal subunit protein mS23 (RSM25) from Meyerozyma guilliermondii (strain ATCC 6260 / CBS 566 / DSM 6381 / JCM 1539 / NBRC 10279 / NRRL Y-324) (Yeast).